Here is a 347-residue protein sequence, read N- to C-terminus: GMP reductase (347 aa).

Position 108–131 (108–131 (ADFEKTKQILDLNPALNFVCIDVA)) interacts with NADP(+). K(+) is bound by residues glycine 181 and glycine 183. Catalysis depends on cysteine 186, which acts as the Thioimidate intermediate. 216 to 239 (IVSDGGCTTPGDVAKAFGGGADFV) contacts NADP(+).

Belongs to the IMPDH/GMPR family. GuaC type 1 subfamily. Homotetramer.

It carries out the reaction IMP + NH4(+) + NADP(+) = GMP + NADPH + 2 H(+). Functionally, catalyzes the irreversible NADPH-dependent deamination of GMP to IMP. It functions in the conversion of nucleobase, nucleoside and nucleotide derivatives of G to A nucleotides, and in maintaining the intracellular balance of A and G nucleotides. The polypeptide is GMP reductase (Escherichia coli O7:K1 (strain IAI39 / ExPEC)).